An 800-amino-acid polypeptide reads, in one-letter code: DNA topoisomerase 1 (800 aa).

Residues 1-111 (MKLVIVESPA…VKSDDFFKRV (111 aa)) form the Toprim domain. Mg(2+)-binding residues include glutamate 7 and aspartate 80. Residues 132 to 568 (DNNLVNAQQA…FWNGFNHNIE (437 aa)) form the Topo IA-type catalytic domain. Residues 166 to 171 (SAGRVQ) form an interaction with DNA region. Tyrosine 304 (O-(5'-phospho-DNA)-tyrosine intermediate) is an active-site residue. Residues 600-627 (CPSCKTGELSLKLGKFGAFLACSNYPEC) form a C4-type zinc finger.

The protein belongs to the type IA topoisomerase family. Monomer. It depends on Mg(2+) as a cofactor.

The enzyme catalyses ATP-independent breakage of single-stranded DNA, followed by passage and rejoining.. In terms of biological role, releases the supercoiling and torsional tension of DNA, which is introduced during the DNA replication and transcription, by transiently cleaving and rejoining one strand of the DNA duplex. Introduces a single-strand break via transesterification at a target site in duplex DNA. The scissile phosphodiester is attacked by the catalytic tyrosine of the enzyme, resulting in the formation of a DNA-(5'-phosphotyrosyl)-enzyme intermediate and the expulsion of a 3'-OH DNA strand. The free DNA strand then undergoes passage around the unbroken strand, thus removing DNA supercoils. Finally, in the religation step, the DNA 3'-OH attacks the covalent intermediate to expel the active-site tyrosine and restore the DNA phosphodiester backbone. The polypeptide is DNA topoisomerase 1 (Rickettsia bellii (strain RML369-C)).